The following is a 256-amino-acid chain: Protein FixA (256 aa).

It belongs to the ETF beta-subunit/FixA family. As to quaternary structure, heterodimer of FixA and FixB.

The protein operates within amine and polyamine metabolism; carnitine metabolism. Its function is as follows. Required for anaerobic carnitine reduction. May bring reductant to CaiA. This chain is Protein FixA, found in Salmonella dublin (strain CT_02021853).